We begin with the raw amino-acid sequence, 287 residues long: Cyclopropane mycolic acid synthase 3 (287 aa).

Residues 33–34 (YS), 68–76 (LLDIGCGWG), 94–99 (TLSENQ), and 123–124 (WE) each bind S-adenosyl-L-methionine. Residue Cys269 is part of the active site.

It belongs to the CFA/CMAS family. As to quaternary structure, homodimer.

The protein resides in the cytoplasm. It carries out the reaction a 1-acyl-2-(9Z)-enoyl-sn-glycero-3-phospholipid + S-adenosyl-L-methionine = a 1-acyl-2-(9-cyclopronane)-acyl-sn-glycero-3-phospholipid + S-adenosyl-L-homocysteine + H(+). Its pathway is lipid metabolism; mycolic acid biosynthesis. Involved in the phagosome maturation block (PMB). Catalyzes the conversion of a double bond to a cyclopropane ring at the proximal position of an alpha mycolic acid via the transfer of a methylene group from S-adenosyl-L-methionine. It can use cis, cis 11,14-eicosadienoic acid and linoelaidic acid as substrate. Cyclopropanated mycolic acids are key factors participating in cell envelope permeability, host immunomodulation and persistence. The polypeptide is Cyclopropane mycolic acid synthase 3 (pcaA) (Mycobacterium tuberculosis (strain CDC 1551 / Oshkosh)).